The sequence spans 54 residues: Large ribosomal subunit protein bL33 (54 aa).

Belongs to the bacterial ribosomal protein bL33 family.

This is Large ribosomal subunit protein bL33 from Corynebacterium efficiens (strain DSM 44549 / YS-314 / AJ 12310 / JCM 11189 / NBRC 100395).